The primary structure comprises 229 residues: DNA repair protein RecO (229 aa).

Belongs to the RecO family.

Involved in DNA repair and RecF pathway recombination. This Pseudomonas fluorescens (strain ATCC BAA-477 / NRRL B-23932 / Pf-5) protein is DNA repair protein RecO.